A 294-amino-acid chain; its full sequence is tRNA dimethylallyltransferase (294 aa).

11–18 (GPTAVGKT) contributes to the ATP binding site. Substrate is bound at residue 13–18 (TAVGKT). The interval 36–39 (DSQQ) is interaction with substrate tRNA.

The protein belongs to the IPP transferase family. In terms of assembly, monomer. It depends on Mg(2+) as a cofactor.

The enzyme catalyses adenosine(37) in tRNA + dimethylallyl diphosphate = N(6)-dimethylallyladenosine(37) in tRNA + diphosphate. In terms of biological role, catalyzes the transfer of a dimethylallyl group onto the adenine at position 37 in tRNAs that read codons beginning with uridine, leading to the formation of N6-(dimethylallyl)adenosine (i(6)A). This is tRNA dimethylallyltransferase from Lactococcus lactis subsp. cremoris (strain SK11).